Consider the following 362-residue polypeptide: MLSKFYYCKMRKGKSPSSFFSLHKKYLLTGVTILSFIFMFQYKYHEVLTVYEDKTNVQQSSRLFWTRLLFGRTRSRITGRIFNIEIPHSSRLYVYNFFIKYLNINKEEIKYPIESYKSLGDFFSRYIREDTRPIGDLNEYSIVSPCDSEIVDFGELTSNYLDNVKGIKFNIKTFLGSDMIKKYNDDSTSFYYAIFYLSPKKYHHFHAPFNFKYKIRRHISGEVFPVFQGMFKIINNLFDINERVILSGEWKGGHVYYAAISAYNVGNIKIVNDEDLLTNNLRTQLSYMGGDINTKIYDHYKDLEIGDEVGEFKVGSSIIVIFENKKNFKWNVKPNQQISVGERIGGVDQPKQPQNKFIKIRS.

Residues Y26–Y44 traverse the membrane as a helical segment. Active-site charge relay system; for autoendoproteolytic cleavage activity residues include D147, H206, and S316. S316 acts as the Schiff-base intermediate with substrate; via pyruvic acid; for decarboxylase activity in catalysis. S316 bears the Pyruvic acid (Ser); by autocatalysis mark.

The protein belongs to the phosphatidylserine decarboxylase family. PSD-B subfamily. Eukaryotic type I sub-subfamily. In terms of assembly, heterodimer of a large membrane-associated beta subunit and a small pyruvoyl-containing alpha subunit. The cofactor is pyruvate. In terms of processing, is synthesized initially as an inactive proenzyme. Formation of the active enzyme involves a self-maturation process in which the active site pyruvoyl group is generated from an internal serine residue via an autocatalytic post-translational modification. Two non-identical subunits are generated from the proenzyme in this reaction, and the pyruvate is formed at the N-terminus of the alpha chain, which is derived from the carboxyl end of the proenzyme. The autoendoproteolytic cleavage occurs by a canonical serine protease mechanism, in which the side chain hydroxyl group of the serine supplies its oxygen atom to form the C-terminus of the beta chain, while the remainder of the serine residue undergoes an oxidative deamination to produce ammonia and the pyruvoyl prosthetic group on the alpha chain. During this reaction, the Ser that is part of the protease active site of the proenzyme becomes the pyruvoyl prosthetic group, which constitutes an essential element of the active site of the mature decarboxylase.

The protein resides in the endoplasmic reticulum membrane. It catalyses the reaction a 1,2-diacyl-sn-glycero-3-phospho-L-serine + H(+) = a 1,2-diacyl-sn-glycero-3-phosphoethanolamine + CO2. It functions in the pathway phospholipid metabolism; phosphatidylethanolamine biosynthesis; phosphatidylethanolamine from CDP-diacylglycerol: step 2/2. Catalyzes the formation of phosphatidylethanolamine (PtdEtn) from phosphatidylserine (PtdSer). Plays a central role in phospholipid metabolism and in the interorganelle trafficking of phosphatidylserine. This Plasmodium falciparum protein is Phosphatidylserine decarboxylase proenzyme.